We begin with the raw amino-acid sequence, 287 residues long: Ribosomal RNA small subunit methyltransferase I (287 aa).

This sequence belongs to the methyltransferase superfamily. RsmI family.

The protein localises to the cytoplasm. The enzyme catalyses cytidine(1402) in 16S rRNA + S-adenosyl-L-methionine = 2'-O-methylcytidine(1402) in 16S rRNA + S-adenosyl-L-homocysteine + H(+). Its function is as follows. Catalyzes the 2'-O-methylation of the ribose of cytidine 1402 (C1402) in 16S rRNA. The chain is Ribosomal RNA small subunit methyltransferase I from Streptococcus pyogenes serotype M1.